The chain runs to 591 residues: Formate--tetrahydrofolate ligase (591 aa).

Residue 74 to 81 (TPLGEGKS) coordinates ATP.

This sequence belongs to the formate--tetrahydrofolate ligase family.

It carries out the reaction (6S)-5,6,7,8-tetrahydrofolate + formate + ATP = (6R)-10-formyltetrahydrofolate + ADP + phosphate. It functions in the pathway one-carbon metabolism; tetrahydrofolate interconversion. The polypeptide is Formate--tetrahydrofolate ligase (Desulfovibrio desulfuricans (strain ATCC 27774 / DSM 6949 / MB)).